The sequence spans 286 residues: Pantothenate synthetase (286 aa).

Residue 31–38 coordinates ATP; it reads MGALHDGH. H38 functions as the Proton donor in the catalytic mechanism. Residue Q62 participates in (R)-pantoate binding. Beta-alanine is bound at residue Q62. An ATP-binding site is contributed by 148–151; that stretch reads GKKD. Q154 lines the (R)-pantoate pocket. Residues V177 and 185–188 contribute to the ATP site; that span reads KSSR.

Belongs to the pantothenate synthetase family. Homodimer.

The protein resides in the cytoplasm. The enzyme catalyses (R)-pantoate + beta-alanine + ATP = (R)-pantothenate + AMP + diphosphate + H(+). It participates in cofactor biosynthesis; (R)-pantothenate biosynthesis; (R)-pantothenate from (R)-pantoate and beta-alanine: step 1/1. Functionally, catalyzes the condensation of pantoate with beta-alanine in an ATP-dependent reaction via a pantoyl-adenylate intermediate. The chain is Pantothenate synthetase from Staphylococcus epidermidis (strain ATCC 35984 / DSM 28319 / BCRC 17069 / CCUG 31568 / BM 3577 / RP62A).